The chain runs to 848 residues: MFERFTDRARRVVVLAQEEARMLNHNYIGTEHILLGLIHEGEGVAAKSLESLGISLEGVRSQVEEIIGQGQQAPSGHIPFTPRAKKVLELSLREALQLGHNYIGTEHILLGLIREGEGVAAQVLVKLGAELTRVRQQVIQLLSGYQGKEAAEAGTGGRGGESGSPSTSLVLDQFGRNLTAAAMEGKLDPVIGREKEIERVMQVLSRRTKNNPVLIGEPGVGKTAVVEGLAQAIVHGEVPETLKDKQLYTLDLGSLVAGSRYRGDFEERLKKVLKEINTRGDIILFIDELHTLVGAGAAEGAIDAASILKPKLARGELQTIGATTLDEYRKYIEKDAALERRFQPVQVGEPTVEHTIEILKGLRDRYEAHHRVSITDAAMVAAATLADRYINDRFLPDKAIDLIDEAGARMRIRRMTAPPDLREFDEKIAEARREKESAIDAQDFEKAASLRDREKTLVAQRAEREKQWRSGDLDVVAEVDDEQIAEVLGNWTGIPVFKLTEAETTRLLRMEEELHKRIIGQEDAVKAVSKAIRRTRAGLKDPKRPSGSFIFAGPSGVGKTELSKALANFLFGDDDALIQIDMGEFHDRFTASRLFGAPPGYVGYEEGGQLTEKVRRKPFSVVLFDEIEKAHQEIYNSLLQVLEDGRLTDGQGRTVDFKNTVLIFTSNLGTSDISKPVGLGFSKGGGENDYERMKQKVNDELKKHFRPEFLNRIDDIIVFHQLTREEIIRMVDLMISRVAGQLKSKDMALVLTDAAKALLAKRGFDPVLGARPLRRTIQREIEDQLSEKILFEEVGPGQVVTVDVDNWDGEGPGEDAVFTFTGTRKPPAEPDLAKAGAHSAGGPEPAAR.

A Clp R domain is found at 2 to 144; the sequence is FERFTDRARR…RQQVIQLLSG (143 aa). Repeat regions lie at residues 5–70 and 80–144; these read FTDR…IGQG and FTPR…LLSG. Positions 171 to 418 are i; that stretch reads LDQFGRNLTA…RMRIRRMTAP (248 aa). 216–223 contacts ATP; sequence GEPGVGKT. Residues 425-460 enclose the UVR domain; sequence DEKIAEARREKESAIDAQDFEKAASLRDREKTLVAQ. An II region spans residues 479–670; that stretch reads VDDEQIAEVL…VLIFTSNLGT (192 aa). An ATP-binding site is contributed by 553-560; sequence GPSGVGKT. The interval 821-848 is disordered; that stretch reads TGTRKPPAEPDLAKAGAHSAGGPEPAAR.

Belongs to the ClpA/ClpB family. ClpC subfamily.

ATP-dependent specificity component of the Clp protease. It directs the protease to specific substrates. Can perform chaperone functions in the absence of ClpP. Degrades anti-sigma-E factor RseA in the presence of ClpP2. The protein is ATP-dependent Clp protease ATP-binding subunit ClpC1 (clpC1) of Mycobacterium tuberculosis (strain ATCC 25618 / H37Rv).